The chain runs to 150 residues: Holo-[acyl-carrier-protein] synthase (150 aa).

Mg(2+) contacts are provided by Asp8 and Glu57.

It belongs to the P-Pant transferase superfamily. AcpS family. The cofactor is Mg(2+).

The protein resides in the cytoplasm. The catalysed reaction is apo-[ACP] + CoA = holo-[ACP] + adenosine 3',5'-bisphosphate + H(+). Functionally, transfers the 4'-phosphopantetheine moiety from coenzyme A to a Ser of acyl-carrier-protein. This chain is Holo-[acyl-carrier-protein] synthase, found in Jannaschia sp. (strain CCS1).